An 804-amino-acid chain; its full sequence is Probable copper-exporting P-type ATPase (804 aa).

Residues 1-101 are Cytoplasmic-facing; the sequence is MVKDTYISSA…VEHLSRMKRK (101 aa). The region spanning 16-82 is the HMA 1 domain; the sequence is MERTVRVTGM…VIEDLGYGVV (67 aa). The Cu(+) site is built by cysteine 27 and cysteine 30. A helical transmembrane segment spans residues 102–122; that stretch reads LYVAAFAGVLLLFLAHFISLP. Residues 123–128 are Extracellular-facing; sequence YEDFVQ. A helical transmembrane segment spans residues 129 to 149; sequence LLIALPAIFYSGSSIFKAAFS. Topologically, residues 150–159 are cytoplasmic; the sequence is ALRRRTLNMD. The helical transmembrane segment at 160 to 180 threads the bilayer; sequence VMYSMGVGAAFLASVLSTAGV. Topologically, residues 181–186 are extracellular; that stretch reads LPREYS. The helical transmembrane segment at 187-204 threads the bilayer; sequence FYETSVLLLAFLLLGRTL. Over 205–339 the chain is Cytoplasmic; it reads EARAKSRTGE…PIQRLADKVV (135 aa). A helical membrane pass occupies residues 340–360; sequence AYFIPTVLLVAISAFIYWYFI. Residues 361–364 are Extracellular-facing; it reads AHAP. The chain crosses the membrane as a helical span at residues 365–385; the sequence is LLFAFTTLIAVLVVACPCAFG. Residues 386 to 680 lie on the Cytoplasmic side of the membrane; sequence LATPTALTVG…KIKQNIFWAL (295 aa). Residue aspartate 424 is the 4-aspartylphosphate intermediate of the active site. Residues 457 to 462 and 490 to 501 contribute to the ATP site; these read ERRSEH and GEGVVADGILVG. The Mg(2+) site is built by aspartate 618 and aspartate 622. The chain crosses the membrane as a helical span at residues 681–701; it reads IYNVILIPAAAGLLYPIFGVV. Over 702–704 the chain is Extracellular; that stretch reads FRP. A helical membrane pass occupies residues 705 to 725; it reads EFAGLAMAMSSVSVVANSLLL. Topologically, residues 726-804 are cytoplasmic; the sequence is RNYVPPIRRG…AAGYQAKLRS (79 aa). The HMA 2 domain occupies 740 to 801; sequence EKIVLELSGL…AVEAAGYQAK (62 aa). Cu(+) is bound by residues cysteine 751 and cysteine 754.

Belongs to the cation transport ATPase (P-type) (TC 3.A.3) family. Type IB subfamily. Interacts with CopZ probably in the CopZ Cu(+)-bound form.

The protein resides in the cell membrane. The enzyme catalyses Cu(+)(in) + ATP + H2O = Cu(+)(out) + ADP + phosphate + H(+). Its activity is regulated as follows. Activated by Cu(+) and Ag(+) and inhibited by vanadate. Activated by CopZ in its Cu(+)-bound form. Functionally, probably involved in copper and silver export. This is Probable copper-exporting P-type ATPase (copA) from Archaeoglobus fulgidus (strain ATCC 49558 / DSM 4304 / JCM 9628 / NBRC 100126 / VC-16).